The chain runs to 501 residues: Myosin heavy chain, embryonic smooth muscle isoform (501 aa).

Positions 1–457 (REAREKETKA…TLKNRLRRGG (457 aa)) form a coiled coil. Positions 1–501 (REAREKETKA…VNETQPPQSE (501 aa)) are rodlike tail (S2 and LMM domains). 3 disordered regions span residues 182–202 (YQRE…QSKE), 221–254 (LASS…ALLD), and 397–501 (MEKA…PQSE). Over residues 223 to 233 (SSERARRHAEQ) the composition is skewed to basic and acidic residues. Over residues 492–501 (VNETQPPQSE) the composition is skewed to polar residues.

In terms of assembly, muscle myosin is a hexameric protein that consists of 2 heavy chain subunits (MHC), 2 alkali light chain subunits (MLC) and 2 regulatory light chain subunits (MLC-2).

The protein localises to the cytoplasm. It localises to the myofibril. Muscle contraction. The protein is Myosin heavy chain, embryonic smooth muscle isoform of Oryctolagus cuniculus (Rabbit).